Reading from the N-terminus, the 220-residue chain is NAD(P)H-quinone oxidoreductase subunit M, chloroplastic (220 aa).

Residues 1-37 (MATTASPFLSPAKLSLERRLPRATWTARRSVRFPPVR) constitute a chloroplast transit peptide. The interval 20 to 91 (LPRATWTARR…PVQPLAESKN (72 aa)) is disordered. Positions 34-44 (PPVRAQDQQQQ) are enriched in low complexity.

The protein belongs to the NDH complex subunit M family. In terms of assembly, part of the chloroplast NDH complex, composed of a mixture of chloroplast and nucleus encoded subunits. Component of the NDH subcomplex A, at least composed of ndhH, ndhI, ndhJ, ndhK, ndhL, ndhM, ndhN and ndhO.

The protein localises to the plastid. Its subcellular location is the chloroplast thylakoid membrane. The enzyme catalyses a plastoquinone + NADH + (n+1) H(+)(in) = a plastoquinol + NAD(+) + n H(+)(out). It carries out the reaction a plastoquinone + NADPH + (n+1) H(+)(in) = a plastoquinol + NADP(+) + n H(+)(out). Its function is as follows. NDH shuttles electrons from NAD(P)H:plastoquinone, via FMN and iron-sulfur (Fe-S) centers, to quinones in the photosynthetic chain and possibly in a chloroplast respiratory chain. The immediate electron acceptor for the enzyme in this species is believed to be plastoquinone. Couples the redox reaction to proton translocation, and thus conserves the redox energy in a proton gradient. This chain is NAD(P)H-quinone oxidoreductase subunit M, chloroplastic, found in Oryza sativa subsp. indica (Rice).